We begin with the raw amino-acid sequence, 391 residues long: Methyltransferase/ribosomally synthesized type I borosin cyclic peptide precursor cmaMA (391 aa).

The segment at 1-253 (MDATANPKAG…TISTFYLPPK (253 aa)) is methyltransferase domain. Catalysis depends on residues arginine 72, tyrosine 76, and tyrosine 98. S-adenosyl-L-methionine is bound by residues tyrosine 98, histidine 100, valine 103, alanine 130, glutamine 172, alanine 215, serine 246, and threonine 247. The segment at 254-373 (APSAKVSLNR…AQLSGALKEG (120 aa)) is clasp domain. The precursor leader stretch occupies residues 374–376 (GVP). Leucine 382 bears the N-methylleucine mark. N-methylphenylalanine is present on residues phenylalanine 385 and phenylalanine 386. 2 positions are modified to N-methylisoleucine: isoleucine 387 and isoleucine 388.

In the N-terminal section; belongs to the precorrin methyltransferase family. In terms of assembly, homodimer. Post-translationally, cmaMA automethylates at Leu-382, Phe-385, Phe-386, Ile-387 and Ile-388 before being processed by the prolyloligopeptidase ledP which likely forms a peptidyl ester upon removal of the follower propeptide, which then undergoes macrocyclization with the N-terminus of the modified core peptide. Peptide backbone alpha-N-methylations change the physicochemical properties of amide bonds to provide structural constraints and other favorable characteristics including biological membrane permeability to peptides.

It functions in the pathway secondary metabolite biosynthesis. Functionally, fusion protein of the methyltransferase cmaM and a type I borosin core peptide; part of the gene cluster that mediates the biosynthesis of a type I borosin, a highly methylated cyclic peptide with potent biological activities. Type I borosins derive from the C-terminus of the fusion protein, and it is the same protein that methylates its own C-terminus using S-adenosyl methionine (SAM). The C-terminus is subsequently cleaved off and macrocyclized by a prolyloligopeptidase to give the final product. In Coprinopsis marcescibilis (Agaric fungus), this protein is Methyltransferase/ribosomally synthesized type I borosin cyclic peptide precursor cmaMA.